We begin with the raw amino-acid sequence, 477 residues long: Methylenetetrahydrofolate--tRNA-(uracil-5-)-methyltransferase TrmFO (477 aa).

14-19 (GGGLAG) serves as a coordination point for FAD.

It belongs to the MnmG family. TrmFO subfamily. FAD is required as a cofactor.

The protein resides in the cytoplasm. The catalysed reaction is uridine(54) in tRNA + (6R)-5,10-methylene-5,6,7,8-tetrahydrofolate + NADH + H(+) = 5-methyluridine(54) in tRNA + (6S)-5,6,7,8-tetrahydrofolate + NAD(+). It carries out the reaction uridine(54) in tRNA + (6R)-5,10-methylene-5,6,7,8-tetrahydrofolate + NADPH + H(+) = 5-methyluridine(54) in tRNA + (6S)-5,6,7,8-tetrahydrofolate + NADP(+). Functionally, catalyzes the folate-dependent formation of 5-methyl-uridine at position 54 (M-5-U54) in all tRNAs. The polypeptide is Methylenetetrahydrofolate--tRNA-(uracil-5-)-methyltransferase TrmFO (Rhizobium johnstonii (strain DSM 114642 / LMG 32736 / 3841) (Rhizobium leguminosarum bv. viciae)).